The following is a 469-amino-acid chain: Fe(3+)-Zn(2+) purple acid phosphatase 12 (469 aa).

An N-terminal signal peptide occupies residues 1-28 (MSSRSDLKIKRVSLIIFLLSVLVEFCYG). A glycan (N-linked (GlcNAc...) asparagine) is linked at asparagine 114. Aspartate 168 is a binding site for Fe cation. Residue asparagine 176 is glycosylated (N-linked (GlcNAc...) asparagine). The Fe cation site is built by aspartate 197 and tyrosine 200. Aspartate 197 provides a ligand contact to Zn(2+). Residue asparagine 234 participates in Zn(2+) binding. Asparagine 234 is a substrate binding site. An N-linked (GlcNAc...) asparagine glycan is attached at asparagine 307. Histidine 319 serves as a coordination point for Zn(2+). The active-site Proton donor is the histidine 329. Position 356 (histidine 356) interacts with Zn(2+). Residue 356-358 (HVH) coordinates substrate. Fe cation is bound at residue histidine 358. N-linked (GlcNAc...) asparagine glycosylation occurs at asparagine 429.

Belongs to the metallophosphoesterase superfamily. Purple acid phosphatase family. Homodimer; disulfide-linked. Fe cation serves as cofactor. It depends on Zn(2+) as a cofactor. In terms of tissue distribution, expressed in roots, stems, leaves, flowers and siliques.

The protein localises to the secreted. The catalysed reaction is a phosphate monoester + H2O = an alcohol + phosphate. The polypeptide is Fe(3+)-Zn(2+) purple acid phosphatase 12 (PAP12) (Arabidopsis thaliana (Mouse-ear cress)).